A 361-amino-acid polypeptide reads, in one-letter code: Phospho-N-acetylmuramoyl-pentapeptide-transferase (361 aa).

The next 10 helical transmembrane spans lie at 28–48, 74–94, 99–119, 135–155, 167–187, 203–223, 236–256, 263–283, 288–308, and 338–358; these read LAVL…IKFL, TMGG…LADL, IWIT…DDYA, LLLQ…TIDS, SLSM…IVGA, VPIA…GNLI, TGEL…FLWF, VFMG…ISVI, IVLG…IMQV, and KVVI…LSSL.

This sequence belongs to the glycosyltransferase 4 family. MraY subfamily. It depends on Mg(2+) as a cofactor.

The protein localises to the cell inner membrane. The enzyme catalyses UDP-N-acetyl-alpha-D-muramoyl-L-alanyl-gamma-D-glutamyl-meso-2,6-diaminopimeloyl-D-alanyl-D-alanine + di-trans,octa-cis-undecaprenyl phosphate = di-trans,octa-cis-undecaprenyl diphospho-N-acetyl-alpha-D-muramoyl-L-alanyl-D-glutamyl-meso-2,6-diaminopimeloyl-D-alanyl-D-alanine + UMP. Its pathway is cell wall biogenesis; peptidoglycan biosynthesis. Catalyzes the initial step of the lipid cycle reactions in the biosynthesis of the cell wall peptidoglycan: transfers peptidoglycan precursor phospho-MurNAc-pentapeptide from UDP-MurNAc-pentapeptide onto the lipid carrier undecaprenyl phosphate, yielding undecaprenyl-pyrophosphoryl-MurNAc-pentapeptide, known as lipid I. This Rickettsia bellii (strain RML369-C) protein is Phospho-N-acetylmuramoyl-pentapeptide-transferase.